Here is a 397-residue protein sequence, read N- to C-terminus: DNA-directed RNA polymerase subunit Rpo1C (397 aa).

It belongs to the RNA polymerase beta' chain family. Part of the RNA polymerase complex.

It localises to the cytoplasm. It carries out the reaction RNA(n) + a ribonucleoside 5'-triphosphate = RNA(n+1) + diphosphate. In terms of biological role, DNA-dependent RNA polymerase (RNAP) catalyzes the transcription of DNA into RNA using the four ribonucleoside triphosphates as substrates. Forms part of the jaw domain. The polypeptide is DNA-directed RNA polymerase subunit Rpo1C (Methanosarcina acetivorans (strain ATCC 35395 / DSM 2834 / JCM 12185 / C2A)).